Here is a 624-residue protein sequence, read N- to C-terminus: D-3-phosphoglycerate dehydrogenase 2, chloroplastic (624 aa).

The N-terminal 49 residues, 1–49 (MAFSSSCSSVKAVNSRWTSPSPSPSSRFAVLPAFLHRRYATSVKLTAIS), are a transit peptide targeting the chloroplast. Serine 71 carries the post-translational modification Phosphoserine. Residues 231–232 (KV), aspartate 251, 310–312 (VAR), and aspartate 336 each bind NAD(+). Arginine 312 is a catalytic residue. Glutamate 341 is an active-site residue. Catalysis depends on histidine 360, which acts as the Proton donor. Residue 360–363 (HLGA) coordinates NAD(+). The 73-residue stretch at 552–624 (LILCRQVDQP…AIEEFVFLKL (73 aa)) folds into the ACT domain.

It belongs to the D-isomer specific 2-hydroxyacid dehydrogenase family. Ubiquitous, but highly expressed in roots and in dark-grown leaf tissues. Expressed in the vasculature, stigma, anther filaments and shoot apical meristem. Not detected in the root meristem or in embryo.

The protein resides in the plastid. The protein localises to the chloroplast. The enzyme catalyses (2R)-3-phosphoglycerate + NAD(+) = 3-phosphooxypyruvate + NADH + H(+). It functions in the pathway amino-acid biosynthesis; L-serine biosynthesis; L-serine from 3-phospho-D-glycerate: step 1/3. With respect to regulation, inhibited by 90 uM 3-phosphonooxypyruvate, but not by Ser, Thr, Val, Gly Trp, O-acetyl-L-Ser and Cys. Functionally, involved in the plastidial phosphorylated pathway of serine biosynthesis (PPSB). This is D-3-phosphoglycerate dehydrogenase 2, chloroplastic (PGDH2) from Arabidopsis thaliana (Mouse-ear cress).